A 663-amino-acid chain; its full sequence is Protein LNK2 (663 aa).

Disordered regions lie at residues H528 to R549 and M590 to L663. Over residues G602 to G629 the composition is skewed to basic and acidic residues. Polar residues predominate over residues A639 to V648.

In terms of assembly, interacts with CCA1, LHY, REV4 and REV8, but not with PRR7 or PRR9. In terms of tissue distribution, expressed in roots, stems, leaves, seedlings, cotyledons, inflorescences and siliques. Highest expression in root tips, young leaves and vasculatur tissues.

The protein resides in the nucleus. In terms of biological role, transcriptional coactivator necessary for expression of the clock genes PRR5 and TOC1. Antagonizes REV8 function in the regulation of anthocyanin accumulation. Involved in red light input to the clock. Activates clock-controlled genes with afternoon peak. Mediates light inhibition of hypocotyl elongation. Unable to bind to DNA, but recruited to the evening element (EE)-containing region of the PRR5 and TOC1 promoters through its interaction with the DNA binding proteins REV8 and REV4. The sequence is that of Protein LNK2 from Arabidopsis thaliana (Mouse-ear cress).